A 141-amino-acid polypeptide reads, in one-letter code: VLSPADKNNVKSAWNAIGSHAGEHGAEALERMFLSFPPTKTYFPHFDLSHGSAQIKTHGKKVADALTNAVNHIDDMPGALSALSDLHAHKLRVDPVNFKLLSHCLLVTLASHHPAEFTPAVHASLDKFFAAVSTVLTSKYR.

Positions 1–141 (VLSPADKNNV…VSTVLTSKYR (141 aa)) constitute a Globin domain. Histidine 58 contacts O2. Histidine 87 provides a ligand contact to heme b.

This sequence belongs to the globin family. As to quaternary structure, heterotetramer of two alpha chains and two beta chains. Red blood cells.

Involved in oxygen transport from the lung to the various peripheral tissues. This chain is Hemoglobin subunit alpha-1, found in Varecia variegata (Black-and-white ruffed lemur).